Here is a 490-residue protein sequence, read N- to C-terminus: MDLLVDELFADMNADGASPPPPRPAGGPKNTPAAPPLYATGRLSQAQLMPSPPMPVPPAALFNRLLDDLGFSAGPALCTMLDTWNEDLFSALPTNADLYRECKFLSTLPSDVVEWGDAYVPERTQIDIRAHGDVAFPTLPATRDGLGLYYEALSRFFHAELRAREESYRTVLANFCSALYRYLRASVRQLHRQAHMRGRDRDLGEMLRATIADRYYRETARLARVLFLHLYLFLTREILWAAYAEQMMRPDLFDCLCCDLESWRQLAGLFQPFMFVNGALTVRGVPIEARRLRELNHIREHLNLPLVRSAATEEPGAPLTTPPTLHGNQARASGYFMVLIRAKLDSYSSFTTSPSEAVMREHAYSRARTKNNYGSTIEGLLDLPDDDAPEEAGLAAPRLSFLPAGHTRRLSTAPPTDVSLGDELHLDGEDVAMAHADALDDFDLDMLGDGDSPGPGFTPHDSAPYGALDMADFEFEQMFTDALGIDEYGG.

A disordered region spans residues 12-35 (MNADGASPPPPRPAGGPKNTPAAP). Phosphoserine occurs at positions 18, 353, 411, and 452. The tract at residues 411–490 (STAPPTDVSL…DALGIDEYGG (80 aa)) is transcriptional activation.

The protein belongs to the herpesviridae tegument protein VP16 protein family. In terms of assembly, interacts with tegument protein VP22. Interacts with gH (via C-terminus). Interacts with the virion host shutoff protein (vhs). Interacts with VP11/12. Associates with the VP16-induced complex; binding to host HCFC1 activates VP16 for association with the octamer motif-binding host protein POU2F1, to form a multiprotein-DNA complex responsible for activating transcription of the viral immediate early genes. Interacts with host P-TEFb; this interaction recruits P-TEFb to the viral alpha-gene promoters and overcomes transcriptional inhibition by ICP22 and promotes transcription of IE genes.

Its subcellular location is the virion tegument. It is found in the host nucleus. Functionally, in the early stage of viral replication, acts as a transcriptional activator of immediate-early (IE) gene products (alpha-genes), which is released by invading virions. Recruits P-TEFb to the viral alpha-gene promoters and overcomes transcriptional inhibition by ICP22 to promote transcription of IE genes. VP16-induced complex represents a regulatory switch: when it is on, it promotes IE-gene expression and thus lytic infection, and when it is off, it limits IE-gene transcription favoring latent infection. Acts as a key activator of lytic infection by initiating the lytic program through the assembly of the transcriptional regulatory VP16-induced complex composed of VP16 and two cellular factors, HCFC1 and POU2F1. This complex recognizes the core motif 'TAATGARAT' in alpha-gene promoters. In the late stage of viral replication, VP16, as a tegument, is involved in viral assembly. In terms of biological role, may play a role in the aggregation of tegument proteins around nucleocapsids during virus morphogenesis. The chain is Tegument protein VP16 from Human herpesvirus 1 (strain 17) (HHV-1).